The following is a 237-amino-acid chain: Bax inhibitor 1 (237 aa).

At Met-1–Lys-29 the chain is on the cytoplasmic side. A Glycyl lysine isopeptide (Lys-Gly) (interchain with G-Cter in ubiquitin) cross-link involves residue Lys-7. The helical transmembrane segment at Val-30–Val-50 threads the bilayer. Residues Thr-51 to His-52 are Lumenal-facing. A helical transmembrane segment spans residues Phe-53 to Ala-73. Topologically, residues Thr-74–Gly-86 are cytoplasmic. Residues Leu-87–Ile-107 traverse the membrane as a helical segment. At Ala-108 to Ser-112 the chain is on the lumenal side. A helical membrane pass occupies residues Ile-113–Leu-133. Topologically, residues Tyr-134 to Ser-139 are cytoplasmic. Residues Tyr-140–Gly-160 traverse the membrane as a helical segment. At Asn-161–Ser-166 the chain is on the lumenal side. A helical membrane pass occupies residues Ile-167–Phe-187. The Cytoplasmic segment spans residues Asp-188–His-206. Residues Cys-207–Met-227 constitute an intramembrane region (helical). Residues Asn-228 to Lys-237 lie on the Cytoplasmic side of the membrane.

Belongs to the BI1 family. As to quaternary structure, interacts with BCL2 and BCL2L1. Interacts with ERN1. Post-translationally, ubiquitinated by BFAR, leading to proteasomal degradation. Highly abundant in testis.

Its subcellular location is the endoplasmic reticulum membrane. Its function is as follows. Endoplasmic reticulum (ER)-resident protein that confers cellular protection as an anti-apoptotic protein by limiting multiple stress-inducing pathways surrounding the endoplasmic reticulum and mitochondria. Inhibits the activities of the key sensor for the endoplasmic reticulum unfolded protein response IRE1alpha/ERN1 both directly and by blocking BAX/BAK binding. Modulates ER calcium homeostasis by acting as a calcium-leak channel. Negatively regulates autophagy and autophagosome formation, especially during periods of nutrient deprivation, and reduces cell survival during starvation. The polypeptide is Bax inhibitor 1 (TMBIM6) (Homo sapiens (Human)).